The sequence spans 299 residues: MKMEVLSVQNHIQGKFGVNKIKDWQASTAPLEEEEELTAGVNGNTAAGEGILDVDVVDGHPASVLHMRQHQALNTRPSATPPSAGGGGPLAGGGSVGMTTPKQATSPVAAASFEAPLSGGSAAAYHHAYMTNVLSSTAQQHHPLPASPLQSTACARFGAADNLDDVSASAVRELSQQLQAQLRDAKRRHLACTEVTLPNDLTQRIAAEIIRMSEREPCGERACTLFIEFESEPNKVKRIAYFKVDPDTVSIFELYLTLRQDKSGWSSLVPQFIKNLTRSNTINISPDFTLTKKKLYSSE.

Residues 73–103 (LNTRPSATPPSAGGGGPLAGGGSVGMTTPKQ) form a disordered region. Over residues 84–96 (AGGGGPLAGGGSV) the composition is skewed to gly residues.

Belongs to the DDIT4 family.

It is found in the cytoplasm. Functionally, inhibits cell growth by regulating the Tor pathway upstream of the Tsc1-Tsc2 complex and downstream of Akt1. Acts as a cell death activator during head development. This is Protein charybde (chrb) from Drosophila melanogaster (Fruit fly).